Here is a 1485-residue protein sequence, read N- to C-terminus: MYSSSNSFMGGANSARPGQPPFMQQPSYSQYPPGQPQSQQQTGFPSQPTGYGLQPPQLVGSQLQPQQTGFPGQLQPQFTGFPGAAPQQQQQQQQLGGFQQSVQQPQFTGYPPQNQLLSLQAPSTTGLPTRPAPRTSSEVASSFNDGAGVAPPPPPKSAGSKIPSIRLSFITAQDQAKFEQLFKSAVGDSQTIDGGKAKELLLRSRLPGSELSKIWILSDTTKSGQLFFPEFALAMYLCNLRITGRELPPSLPEKIKNEVSSMVDIISFGVPDTQPEPSRSNVPSFDAPLLENKSAPPAPQQPQPQQPTNAHLLSQLAAQPTGFLPQQTGFQPNQSSFLGPSAGLAPQATGFPGQSQQQYLQTQPTGLMTNPQATGYSGPRPPLPPMPTGFGSNLSPAQTGGASALVAQPTGIPGQWGFVNAPSSGLPNIEALKQQLMPQPGREGGFTTAGLSGNASIPWAITKEEKKIYDDLFRAWDGFHKGFIGGDTAIEIMGQSGLNRQDLERIWTLADPHNRGRLNMDEFAVAMHLIYRKLNGYPVPSRLPPELIPPSTRNLNDSIGTVKSLLSQDAESRKASGAFLQPQKTGVSYLKEHSFRGGARSPGVGRKDATLFKNNDEAAAGYRSSARRRVGNNARAASPATSHTSEEELSVEQLKKKIRETQIMLDAVDFQDENRAEEDEALDRRDRREAESLMDRVRRIQDDIDTHPNATFRNLDNGAEKRSLRRQLQAYEDQVPQVASEVRRIERELAEAKLELFRLKDAKAHPNSASNIVGTGPGGAVTEADRIKARARARMQARAAELAGRPVPASADDDGAAARRLESESTVIRADRERNEAMTRDVEESVREFTRSLEDSFKEGGETSTREHERRRWEDALGVEDVIRDFIYDLKRGSRTAHVRKEEETRTLPTHDHRVRHEDPSIASRPSPAPSAGSVGSAPGATHEDRVAAARERAQRRIAERMAAAGLKPHTDSTETLVQRQEREKREREERLRRAEEEDAKREQERQRRLAEEQRGPAKPAATKPVGKKPPPAPPSRRGRTDSAGQADARPAVEETAATEQAAREQAIREEQQAQEEETKRLEMEAQQREQELLKEKEAQEARLRALEEQVRQGKVRKQEEKRRKEEAERSAKEQEAKLAAQRAELEMARERERQLQLELEGLEDESSSDEEGPVNITPQDSTPTQSQVLPAPSPAAAAPEPELEPPVSPEITSSASSHAAPSSFSPETESKNPYFRITSQAAENQVSSPPPVPQTTITSPKTDVQSTNPFHRLAQQEAAKPAFTAPGPLERKSRVRPEADDDWSAAGSDFDSSDDEDDERPGGGSAKQLASILFGTMAPPRPLSAMDDKSPSKSSTPVQDNTVASPVVPEASASLSAPAAPPPPPPPPPPPASAPMVVPSYDPSTAPPPPPPAPPIAPPAPPPGPPPPPGPPPPPAPPGAAAPAAPAGAADRSALLASIQMGKGLRKVQTNDRSSSSSAGRVLG.

Positions 1–161 (MYSSSNSFMG…PPPPKSAGSK (161 aa)) are disordered. Residues 21–49 (PFMQQPSYSQYPPGQPQSQQQTGFPSQPT) are compositionally biased toward low complexity. A compositionally biased stretch (polar residues) spans 59-78 (VGSQLQPQQTGFPGQLQPQF). The span at 81–107 (FPGAAPQQQQQQQQLGGFQQSVQQPQF) shows a compositional bias: low complexity. Composition is skewed to polar residues over residues 111 to 127 (PPQN…TTGL) and 134 to 144 (RTSSEVASSFN). One can recognise an EH 1 domain in the interval 174–262 (DQAKFEQLFK…EKIKNEVSSM (89 aa)). Residues 206–241 (LPGSELSKIWILSDTTKSGQLFFPEFALAMYLCNLR) enclose the EF-hand 1 domain. Disordered regions lie at residues 268-309 (FGVP…QPTN) and 323-342 (FLPQ…GPSA). Residues 296–305 (PPAPQQPQPQ) show a composition bias toward pro residues. Over residues 323-338 (FLPQQTGFQPNQSSFL) the composition is skewed to polar residues. The region spanning 465 to 554 (EKKIYDDLFR…PELIPPSTRN (90 aa)) is the EH 2 domain. Residues 498 to 533 (LNRQDLERIWTLADPHNRGRLNMDEFAVAMHLIYRK) form the EF-hand 2 domain. Disordered regions lie at residues 620–649 (AGYR…EEEL), 799–871 (AAEL…HERR), and 895–1485 (RTAH…RVLG). Residues 645–765 (SEEELSVEQL…LFRLKDAKAH (121 aa)) are a coiled coil. 2 stretches are compositionally biased toward basic and acidic residues: residues 816-871 (AAAR…HERR) and 899-920 (VRKE…HEDP). A compositionally biased stretch (low complexity) spans 921 to 941 (SIASRPSPAPSAGSVGSAPGA). Composition is skewed to basic and acidic residues over residues 942–960 (THED…RIAE), 980–1016 (RQER…EQRG), 1062–1137 (AARE…EQEA), and 1144–1156 (AELE…ERQL). Residues 1054–1172 (EETAATEQAA…LEDESSSDEE (119 aa)) are a coiled coil. Acidic residues predominate over residues 1161-1173 (EGLEDESSSDEEG). Over residues 1177–1188 (ITPQDSTPTQSQ) the composition is skewed to polar residues. Low complexity-rich tracts occupy residues 1189-1201 (VLPA…AAPE) and 1210-1226 (PEIT…SSFS). Polar residues-rich tracts occupy residues 1238 to 1248 (ITSQAAENQVS) and 1255 to 1270 (QTTI…STNP). Positions 1290–1299 (LERKSRVRPE) are enriched in basic and acidic residues. Polar residues predominate over residues 1353–1363 (SKSSTPVQDNT). Low complexity predominate over residues 1364–1379 (VASPVVPEASASLSAP). Pro residues-rich tracts occupy residues 1380–1394 (AAPP…PPAS) and 1406–1441 (TAPP…PPGA). Residues 1442-1451 (AAPAAPAGAA) show a composition bias toward low complexity. The region spanning 1452 to 1469 (DRSALLASIQMGKGLRKV) is the WH2 domain. The span at 1472–1485 (NDRSSSSSAGRVLG) shows a compositional bias: polar residues.

This sequence belongs to the PAN1 family. In terms of assembly, component of the PAN1 actin cytoskeleton-regulatory complex.

It is found in the cell membrane. It localises to the endosome membrane. Its subcellular location is the cytoplasm. The protein resides in the cytoskeleton. The protein localises to the actin patch. In terms of biological role, component of the PAN1 actin cytoskeleton-regulatory complex required for the internalization of endosomes during actin-coupled endocytosis. The complex links the site of endocytosis to the cell membrane-associated actin cytoskeleton. Mediates uptake of external molecules and vacuolar degradation of plasma membrane proteins. Plays a role in the proper organization of the cell membrane-associated actin cytoskeleton and promotes its destabilization. The protein is Actin cytoskeleton-regulatory complex protein pan1 (pan1) of Aspergillus clavatus (strain ATCC 1007 / CBS 513.65 / DSM 816 / NCTC 3887 / NRRL 1 / QM 1276 / 107).